Consider the following 161-residue polypeptide: Cytochrome c-type biogenesis protein CcmE (161 aa).

The Cytoplasmic portion of the chain corresponds to 1 to 8; it reads MNPRRKKR. The helical; Signal-anchor for type II membrane protein transmembrane segment at 9–29 threads the bilayer; it reads LTLAIALIGGVAAIASLLLYA. Residues 30–161 are Periplasmic-facing; sequence LNSNLNLFYT…DYSQQKSAAQ (132 aa). Heme is bound by residues His131 and Tyr135. The segment at 138 to 161 is disordered; it reads PEVAEAMGQKHEKLDYSQQKSAAQ.

It belongs to the CcmE/CycJ family.

The protein localises to the cell inner membrane. Heme chaperone required for the biogenesis of c-type cytochromes. Transiently binds heme delivered by CcmC and transfers the heme to apo-cytochromes in a process facilitated by CcmF and CcmH. In Shewanella sp. (strain MR-4), this protein is Cytochrome c-type biogenesis protein CcmE.